A 134-amino-acid polypeptide reads, in one-letter code: Iron-sulfur cluster insertion protein ErpA (134 aa).

Iron-sulfur cluster contacts are provided by Cys47, Cys126, and Cys128.

Belongs to the HesB/IscA family. Homodimer. The cofactor is iron-sulfur cluster.

Its function is as follows. Required for insertion of 4Fe-4S clusters for at least IspG. The chain is Iron-sulfur cluster insertion protein ErpA from Coxiella burnetii (strain RSA 331 / Henzerling II).